The sequence spans 312 residues: Ubiquinone biosynthesis protein COQ9, mitochondrial (312 aa).

The transit peptide at 1–45 directs the protein to the mitochondrion; it reads MAATAAVSGVLRRLGWRLLQLRCLPVARCQSPLMPRAFHTAVGFR. The SIFI-degron signature appears at 17–32; sequence RLLQLRCLPVARCQSP. A disordered region spans residues 43-92; that stretch reads GFRSSEEQRQQPPHSSQQHSETQGPEFSRPPPRYTDQSGEEEEDYESEEQ. The span at 52 to 63 shows a compositional bias: low complexity; the sequence is QQPPHSSQQHSE. Residue Ser-80 is modified to Phosphoserine. Acidic residues predominate over residues 80-91; that stretch reads SGEEEEDYESEE. An N6-acetyllysine modification is found at Lys-169. An a 1,2-diacylglycero-3-phosphoethanolamine-binding site is contributed by Arg-238.

The protein belongs to the COQ9 family. As to quaternary structure, homodimer. Heterodimer; two heterodimers of COQ7:COQ9 come together on the same side of the lipid pseudo-bilayer and form a curved tetramer with a hydrophobic surface suitable for membrane interaction. These two tetramers assemble into a soluble octamer with a pseudo-bilayer of lipids captured within. Interacts with COQ7; this interaction allows ubiquinone (CoQ) isoprene intermediates presentation to COQ7 and facilitates the COQ7-mediated hydroxylase step. In response to mitochondrial stress, the precursor protein is ubiquitinated by the SIFI complex in the cytoplasm before mitochondrial import, leading to its degradation. Within the SIFI complex, UBR4 initiates ubiquitin chain that are further elongated or branched by KCMF1.

The protein localises to the mitochondrion. It participates in cofactor biosynthesis; ubiquinone biosynthesis. Membrane-associated protein that warps the membrane surface to access and bind aromatic isoprenes with high specificity, including ubiquinone (CoQ) isoprene intermediates and presents them directly to COQ7, therefore facilitating the COQ7-mediated hydroxylase step. Participates in the biosynthesis of coenzyme Q, also named ubiquinone, an essential lipid-soluble electron transporter for aerobic cellular respiration. This is Ubiquinone biosynthesis protein COQ9, mitochondrial from Rattus norvegicus (Rat).